We begin with the raw amino-acid sequence, 888 residues long: 3-hydroxy-3-methylglutaryl-coenzyme A reductase (888 aa).

The Cytoplasmic segment spans residues 1–9 (MLSRLFRMH). A helical transmembrane segment spans residues 10-39 (GLFVASHPWEVIVGTVTLTICMMSMNMFTG). Residues 40-56 (NNKICGWNYECPKFEED) lie on the Lumenal side of the membrane. Residues 57-78 (VLSSDIIILTITRCIAILYIYF) form a helical membrane-spanning segment. Residues 61–218 (DIIILTITRC…MTFFPACVSL (158 aa)) enclose the SSD domain. The short motif at 75–78 (YIYF) is the INSIG-binding motif element. Residues 79–89 (QFQNLRQLGSK) lie on the Cytoplasmic side of the membrane. K89 is covalently cross-linked (Glycyl lysine isopeptide (Lys-Gly) (interchain with G-Cter in ubiquitin)). The helical transmembrane segment at 90–114 (YILGIAGLFTIFSSFVFSTVVIHFL) threads the bilayer. Residues 115 to 123 (DKELTGLNE) lie on the Lumenal side of the membrane. A helical membrane pass occupies residues 124–149 (ALPFFLLLIDLSRASTLAKFALSSNS). Residues 150-159 (QDEVRENIAR) lie on the Cytoplasmic side of the membrane. A helical membrane pass occupies residues 160-187 (GMAILGPTFTLDALVECLVIGVGTMSGV). The Lumenal segment spans residues 188–191 (RQLE). The chain crosses the membrane as a helical span at residues 192 to 220 (IMCCFGCMSVLANYFVFMTFFPACVSLVL). At 221–248 (ELSRESREGRPIWLLSHFARVLEEEENK) the chain is on the cytoplasmic side. Residue K248 forms a Glycyl lysine isopeptide (Lys-Gly) (interchain with G-Cter in ubiquitin) linkage. A helical membrane pass occupies residues 249 to 275 (PNPVTQRVKMIMSLGLVLVHAHSRWIA). Residues 276-314 (DPSPQNSTADTSKVSLGLDENVSKRIEPSVSLWQFYLSK) lie on the Lumenal side of the membrane. Residues N281 and N296 are each glycosylated (N-linked (GlcNAc...) asparagine). The helical transmembrane segment at 315 to 339 (MISMDIEQVITLSLALLLAVKYIFF) threads the bilayer. Over 340–888 (EQTETESTLS…LQGACTKKTA (549 aa)) the chain is Cytoplasmic. Residues E559, K691, and D767 each act as charge relay system in the active site. Catalysis depends on H866, which acts as the Proton donor. Residue S872 is modified to Phosphoserine; by AMPK.

This sequence belongs to the HMG-CoA reductase family. In terms of assembly, homotetramer. Homodimer. Interacts (via its SSD) with INSIG1; the interaction, accelerated by sterols, leads to the recruitment of HMGCR to AMFR/gp78 for its ubiquitination by the sterol-mediated ERAD pathway. Interacts with UBIAD1. Undergoes sterol-mediated ubiquitination and ER-associated degradation (ERAD). Accumulation of sterols in the endoplasmic reticulum (ER) membrane, triggers binding of the reductase to the ER membrane protein INSIG1 or INSIG2. The INSIG1 binding leads to the recruitment of the ubiquitin ligase, AMFR/gp78, RNF139 or RNF145, initiating ubiquitination of the reductase. The ubiquitinated reductase is then extracted from the ER membrane and delivered to cytosolic 26S proteosomes by a mechanism probably mediated by the ATPase Valosin-containing protein VCP/p97. The INSIG2-binding leads to the recruitment of the ubiquitin ligase RNF139, initiating ubiquitination of the reductase. Lys-248 is the main site of ubiquitination. Ubiquitination is enhanced by the presence of a geranylgeranylated protein. In terms of processing, N-glycosylated. Deglycosylated by NGLY1 on release from the endoplasmic reticulum (ER) in a sterol-mediated manner. Post-translationally, phosphorylated. Phosphorylation at Ser-872 reduces the catalytic activity.

The protein localises to the endoplasmic reticulum membrane. It localises to the peroxisome membrane. It catalyses the reaction (R)-mevalonate + 2 NADP(+) + CoA = (3S)-3-hydroxy-3-methylglutaryl-CoA + 2 NADPH + 2 H(+). It functions in the pathway metabolic intermediate biosynthesis; (R)-mevalonate biosynthesis; (R)-mevalonate from acetyl-CoA: step 3/3. With respect to regulation, regulated by a negative feedback mechanism through sterols and non-sterol metabolites derived from mevalonate. Phosphorylation at Ser-872 down-regulates the catalytic activity. Functionally, catalyzes the conversion of (3S)-hydroxy-3-methylglutaryl-CoA (HMG-CoA) to mevalonic acid, the rate-limiting step in the synthesis of cholesterol and other isoprenoids, thus plays a critical role in cellular cholesterol homeostasis. The protein is 3-hydroxy-3-methylglutaryl-coenzyme A reductase (HMGCR) of Pongo abelii (Sumatran orangutan).